A 319-amino-acid polypeptide reads, in one-letter code: Thioredoxin reductase 1 (319 aa).

FAD is bound by residues 11–14 (SGPA), 40–41 (IA), Gln-45, Asn-54, Val-87, Cys-145, Asp-288, and 295–297 (RQA). The cysteines at positions 142 and 145 are disulfide-linked. At Ser-303 the chain carries Phosphoserine.

This sequence belongs to the class-II pyridine nucleotide-disulfide oxidoreductase family. In terms of assembly, homodimer. Requires FAD as cofactor.

It is found in the cytoplasm. The protein resides in the mitochondrion intermembrane space. It carries out the reaction [thioredoxin]-dithiol + NADP(+) = [thioredoxin]-disulfide + NADPH + H(+). Functionally, central component in the thioredoxin system. Reduces thioredoxins 1 and 2. This chain is Thioredoxin reductase 1 (TRR1), found in Saccharomyces cerevisiae (strain ATCC 204508 / S288c) (Baker's yeast).